We begin with the raw amino-acid sequence, 388 residues long: Succinate--CoA ligase [ADP-forming] subunit beta (388 aa).

The region spanning 9–244 (KQLFARYGLP…QSQEDPREAQ (236 aa)) is the ATP-grasp domain. Residues K46, 53–55 (GRG), E99, T102, and E107 each bind ATP. N199 and D213 together coordinate Mg(2+). Substrate-binding positions include N264 and 321–323 (GIV).

This sequence belongs to the succinate/malate CoA ligase beta subunit family. As to quaternary structure, heterotetramer of two alpha and two beta subunits. Mg(2+) is required as a cofactor.

The enzyme catalyses succinate + ATP + CoA = succinyl-CoA + ADP + phosphate. The catalysed reaction is GTP + succinate + CoA = succinyl-CoA + GDP + phosphate. Its pathway is carbohydrate metabolism; tricarboxylic acid cycle; succinate from succinyl-CoA (ligase route): step 1/1. Succinyl-CoA synthetase functions in the citric acid cycle (TCA), coupling the hydrolysis of succinyl-CoA to the synthesis of either ATP or GTP and thus represents the only step of substrate-level phosphorylation in the TCA. The beta subunit provides nucleotide specificity of the enzyme and binds the substrate succinate, while the binding sites for coenzyme A and phosphate are found in the alpha subunit. The polypeptide is Succinate--CoA ligase [ADP-forming] subunit beta (Enterobacter sp. (strain 638)).